Consider the following 470-residue polypeptide: Uronate isomerase (470 aa).

It belongs to the metallo-dependent hydrolases superfamily. Uronate isomerase family.

The enzyme catalyses D-glucuronate = D-fructuronate. It carries out the reaction aldehydo-D-galacturonate = keto-D-tagaturonate. The protein operates within carbohydrate metabolism; pentose and glucuronate interconversion. This Escherichia coli O8 (strain IAI1) protein is Uronate isomerase.